A 475-amino-acid chain; its full sequence is Adenosylhomocysteinase (475 aa).

Positions 63, 138, and 199 each coordinate substrate. 200–202 (TTT) lines the NAD(+) pocket. Residues Lys-229 and Asp-233 each contribute to the substrate site. Residues Asn-234, 263 to 268 (GYGDVG), Glu-286, Asn-321, 342 to 344 (IGH), and Asn-389 contribute to the NAD(+) site.

It belongs to the adenosylhomocysteinase family. Requires NAD(+) as cofactor.

The protein resides in the cytoplasm. It catalyses the reaction S-adenosyl-L-homocysteine + H2O = L-homocysteine + adenosine. It functions in the pathway amino-acid biosynthesis; L-homocysteine biosynthesis; L-homocysteine from S-adenosyl-L-homocysteine: step 1/1. May play a key role in the regulation of the intracellular concentration of adenosylhomocysteine. The sequence is that of Adenosylhomocysteinase from Solibacter usitatus (strain Ellin6076).